The primary structure comprises 376 residues: Putative transmembrane protein 183BP (376 aa).

Disordered regions lie at residues 1–20 and 102–127; these read MARG…AMPK and AQEE…ELDG. A helical membrane pass occupies residues 300-320; that stretch reads LNFIFIPIVMGMIFTLFTINV.

Belongs to the TMEM183 family. As to expression, expressed in brain, lung, pancreas, thymus, intestine and blood. Not detected in heart, placenta, liver, muscle, kidney, spleen, prostate, testis, ovary and colon.

The protein localises to the membrane. The chain is Putative transmembrane protein 183BP from Homo sapiens (Human).